We begin with the raw amino-acid sequence, 491 residues long: ATP synthase subunit beta, chloroplastic (491 aa).

Residue 172 to 179 (GGAGVGKT) participates in ATP binding.

It belongs to the ATPase alpha/beta chains family. In terms of assembly, F-type ATPases have 2 components, CF(1) - the catalytic core - and CF(0) - the membrane proton channel. CF(1) has five subunits: alpha(3), beta(3), gamma(1), delta(1), epsilon(1). CF(0) has four main subunits: a(1), b(1), b'(1) and c(9-12).

The protein localises to the plastid. It localises to the chloroplast thylakoid membrane. The enzyme catalyses ATP + H2O + 4 H(+)(in) = ADP + phosphate + 5 H(+)(out). Its function is as follows. Produces ATP from ADP in the presence of a proton gradient across the membrane. The catalytic sites are hosted primarily by the beta subunits. The polypeptide is ATP synthase subunit beta, chloroplastic (Pisum sativum (Garden pea)).